The chain runs to 237 residues: Aspartate/glutamate leucyltransferase (237 aa).

This sequence belongs to the R-transferase family. Bpt subfamily.

It is found in the cytoplasm. The enzyme catalyses N-terminal L-glutamyl-[protein] + L-leucyl-tRNA(Leu) = N-terminal L-leucyl-L-glutamyl-[protein] + tRNA(Leu) + H(+). It catalyses the reaction N-terminal L-aspartyl-[protein] + L-leucyl-tRNA(Leu) = N-terminal L-leucyl-L-aspartyl-[protein] + tRNA(Leu) + H(+). In terms of biological role, functions in the N-end rule pathway of protein degradation where it conjugates Leu from its aminoacyl-tRNA to the N-termini of proteins containing an N-terminal aspartate or glutamate. In Marinobacter nauticus (strain ATCC 700491 / DSM 11845 / VT8) (Marinobacter aquaeolei), this protein is Aspartate/glutamate leucyltransferase.